Consider the following 232-residue polypeptide: MTLDALKRQAAARALEYVEDGMRLGLGTGSTAKHFVELLGERVRDGLKVVGVPTSEATRADAERCGIPLTTLDDLDRLDLTVDGADEIDPDLNLIKGGGGALLREKIVAAASERMIVIADETKWVAGLGRFPLPIEVIPFGLAATRRAIAEAFTKAGASGQMVVRKGPDGLAFVTDGGHWIFDAHLGQIPDASHLAGLLNPIPGVVEHGLFIGLARVAMLAGAQGIRVVERR.

Substrate is bound by residues 28 to 31 (TGST), 83 to 86 (DGAD), and 96 to 99 (KGGG). Glutamate 105 (proton acceptor) is an active-site residue. Lysine 123 lines the substrate pocket.

It belongs to the ribose 5-phosphate isomerase family. Homodimer.

The catalysed reaction is aldehydo-D-ribose 5-phosphate = D-ribulose 5-phosphate. The protein operates within carbohydrate degradation; pentose phosphate pathway; D-ribose 5-phosphate from D-ribulose 5-phosphate (non-oxidative stage): step 1/1. In terms of biological role, catalyzes the reversible conversion of ribose-5-phosphate to ribulose 5-phosphate. This Nitrobacter hamburgensis (strain DSM 10229 / NCIMB 13809 / X14) protein is Ribose-5-phosphate isomerase A.